Here is a 1092-residue protein sequence, read N- to C-terminus: NAD-specific glutamate dehydrogenase (1092 aa).

Residue K626 is part of the active site.

The protein belongs to the Glu/Leu/Phe/Val dehydrogenases family. In terms of assembly, homotetramer. Interacts with NNK1. Post-translationally, phosphorylated by a complex containing the NNK1 kinase.

It catalyses the reaction L-glutamate + NAD(+) + H2O = 2-oxoglutarate + NH4(+) + NADH + H(+). NAD(+)-dependent glutamate dehydrogenase which degrades glutamate to ammonia and alpha-ketoglutarate. This is NAD-specific glutamate dehydrogenase (GDH2) from Saccharomyces cerevisiae (strain ATCC 204508 / S288c) (Baker's yeast).